Consider the following 1330-residue polypeptide: Kinectin (1330 aa).

Residues 1 to 6 (MEFYES) lie on the Cytoplasmic side of the membrane. The chain crosses the membrane as a helical; Signal-anchor for type II membrane protein span at residues 7–29 (TYFIVLIPSVVITVIFLFFWLFM). The Lumenal segment spans residues 30–1330 (KETLYDEVLA…KEKEHYQVLE (1301 aa)). 2 disordered regions span residues 49-81 (PTKTDKKKAEKKKNKKKEIQNGNLHESDSESVP) and 108-218 (SSSV…KQKA). Ser75 and Ser77 each carry phosphoserine. The span at 113-122 (ERKKKEKKHK) shows a compositional bias: basic residues. A compositionally biased stretch (basic and acidic residues) spans 123 to 135 (PVLEEQVTKESDV). Thr153 bears the Phosphothreonine mark. Residue Ser156 is modified to Phosphoserine. Basic residues predominate over residues 161 to 171 (SKKKPGQKKSK). 5 N-linked (GlcNAc...) asparagine glycosylation sites follow: Asn172, Asn435, Asn772, Asn904, and Asn1055. Positions 172–182 (NGSDDQDKKVE) are enriched in basic and acidic residues. A coiled-coil region spans residues 332-1329 (HQLQEKDKLL…TKEKEHYQVL (998 aa)). Ser1085 bears the Phosphoserine mark. N-linked (GlcNAc...) asparagine glycosylation is present at Asn1236. Phosphoserine is present on Ser1286. N-linked (GlcNAc...) asparagine glycosylation is present at Asn1302.

The protein belongs to the kinectin family. Parallel homodimers formed between the membrane-bound and the cytosolic form, and also between 2 cytosolic forms. Expressed in male brain, heart, kidney, liver, lung, spleen and testis.

It localises to the endoplasmic reticulum membrane. Its function is as follows. Receptor for kinesin thus involved in kinesin-driven vesicle motility. The sequence is that of Kinectin (KTN1) from Vulpes vulpes (Red fox).